The sequence spans 199 residues: Charged multivesicular body protein 1B1 (199 aa).

A coiled-coil region spans residues 10–48; the sequence is NLKFAAKELNRSSKKCDKEEKAEKAKIKKAIQKGNMEVA. The interval 132 to 156 is interaction with IST1; that stretch reads MEDTMSSTTTLTTPQNQVDMLLQEM. The tract at residues 167–199 is disordered; sequence ELPQGQTGSVGTSVASAEQDELSQRLARLRDQV. Residues 170 to 182 show a composition bias toward polar residues; it reads QGQTGSVGTSVAS. The interval 174-199 is interaction with SPAST; that stretch reads GSVGTSVASAEQDELSQRLARLRDQV. Positions 178 to 199 form a coiled coil; it reads TSVASAEQDELSQRLARLRDQV. Residues 180–196 are interaction with VPS4A, MITD1 and STAMBP; it reads VASAEQDELSQRLARLR. The interval 180–199 is interaction with VTA1; it reads VASAEQDELSQRLARLRDQV. The tract at residues 183-199 is interaction with VPS4B; sequence AEQDELSQRLARLRDQV. Positions 186–196 match the MIT-interacting motif motif; the sequence is DELSQRLARLR.

Belongs to the SNF7 family. As to quaternary structure, probable peripherally associated component of the endosomal sorting required for transport complex III (ESCRT-III). ESCRT-III components are thought to multimerize to form a flat lattice on the perimeter membrane of the endosome. Several assembly forms of ESCRT-III may exist that interact and act sequentially. Interacts with CHMP1A. Interacts with VTA1; the interaction probably involves the open conformation of CHMP1B. Interacts with CHMP2A. Interacts with VPS4A; the interaction is direct. Interacts with VPS4B; the interaction is direct. Interacts with SPAST (via MIT domain); the interaction is direct. Interacts with IST1. Interacts with MITD1. Interacts with STAMBP.

The protein localises to the cytoplasm. It is found in the cytosol. The protein resides in the endosome. It localises to the late endosome membrane. Its function is as follows. Probable peripherally associated component of the endosomal sorting required for transport complex III (ESCRT-III) which is involved in multivesicular bodies (MVBs) formation and sorting of endosomal cargo proteins into MVBs. MVBs contain intraluminal vesicles (ILVs) that are generated by invagination and scission from the limiting membrane of the endosome and mostly are delivered to lysosomes enabling degradation of membrane proteins, such as stimulated growth factor receptors, lysosomal enzymes and lipids. The MVB pathway appears to require the sequential function of ESCRT-O, -I,-II and -III complexes. ESCRT-III proteins mostly dissociate from the invaginating membrane before the ILV is released. The ESCRT machinery also functions in topologically equivalent membrane fission events, such as the terminal stages of cytokinesis. ESCRT-III proteins are believed to mediate the necessary vesicle extrusion and/or membrane fission activities, possibly in conjunction with the AAA ATPase VPS4. Involved in cytokinesis. Involved in recruiting VPS4A and/or VPS4B and SPAST to the midbody of dividing cells. This is Charged multivesicular body protein 1B1 from Mus musculus (Mouse).